The sequence spans 693 residues: MAQGSHQIDFQVLHDLRQKFPEVPEVVVSRCMLQNNNNLDACCAVLSQESTRYLYGEGDLNFSDDSGISGLRNHMTSLNLDLQSQNIYHHGREGSRMNGSRTLTHSISDGQLQGGQSNSELFQQEPQTAPAQVPQGFNVFGMSSSSGASNSAPHLGFHLGSKGTSSLSQQTPRFNPIMVTLAPNIQTGRNTPTSLHIHGVPPPVLNSPQGNSIYIRPYITTPGGTTRQTQQHSGWVSQFNPMNPQQVYQPSQPGPWTTCPASNPLSHTSSQQPNQQGHQTSHVYMPISSPTTSQPPTIHSSGSSQSSAHSQYNIQNISTGPRKNQIEIKLEPPQRNNSSKLRSSGPRTSSTSSSVNSQTLNRNQPTVYIAASPPNTDELMSRSQPKVYISANAATGDEQVMRNQPTLFISTNSGASAASRNMSGQVSMGPAFIHHHPPKSRAIGNNSATSPRVVVTQPNTKYTFKITVSPNKPPAVSPGVVSPTFELTNLLNHPDHYVETENIQHLTDPTLAHVDRISETRKLSMGSDDAAYTQALLVHQKARMERLQRELEIQKKKLDKLKSEVNEMENNLTRRRLKRSNSISQIPSLEEMQQLRSCNRQLQIDIDCLTKEIDLFQARGPHFNPSAIHNFYDNIGFVGPVPPKPKDQRSIIKTPKTQDTEDDEGAQWNCTACTFLNHPALIRCEQCEMPRHF.

Positions Ile-8 to Thr-51 constitute a CUE domain. The disordered stretch occupies residues Gly-91–Pro-130. Over residues Met-97 to Pro-130 the composition is skewed to polar residues. Asymmetric dimethylarginine is present on Arg-173. Positions Ile-219–Ser-310 are disordered. Low complexity predominate over residues Thr-220–Gln-231. Positions His-232–His-282 are enriched in polar residues. Positions Pro-286–Ser-310 are enriched in low complexity. Lys-329 is covalently cross-linked (Glycyl lysine isopeptide (Lys-Gly) (interchain with G-Cter in SUMO)). The tract at residues Leu-330–Ser-381 is disordered. Positions Ser-343–Thr-359 are enriched in low complexity. 4 positions are modified to phosphoserine: Ser-372, Ser-450, Ser-482, and Ser-524. The stretch at Tyr-532–Arg-619 forms a coiled coil. Residue Lys-562 forms a Glycyl lysine isopeptide (Lys-Gly) (interchain with G-Cter in SUMO) linkage. The residue at position 582 (Ser-582) is a Phosphoserine. Lys-611 participates in a covalent cross-link: Glycyl lysine isopeptide (Lys-Gly) (interchain with G-Cter in ubiquitin). Residues Pro-642–Asp-663 are disordered. The RanBP2-type zinc-finger motif lies at Asp-663–Phe-693. Cys-673 is modified ((Microbial infection) S-methylcysteine). The interval Phe-675 to Glu-685 is interaction with polyubiquitin.

Interacts with MAP3K7 and TRAF6. Identified in the TRIKA2 complex composed of MAP3K7, TAB1 and TAB2. Binds 'Lys-63'-linked polyubiquitin chains. Interacts with NCOR1 and HDAC3 to form a ternary complex. Interacts (via C-terminal) with NUMBL (via PTB domain). Interacts (via the C-terminus) with DYNC2I2 (via WD domains). Interacts with RBCK1. Interacts with TRIM5. Interacts with TRIM38 (via B30.2/SPRY domain), leading to its translocation to lysosomes and degradation. Interacts with ASB1; this interaction promotes TAB2 stability. Post-translationally, degraded in a lysosome-dependent manner following interaction with TRIM38. In terms of processing, SUMOylated by TRIM60; leading to inhibition of MAPK/NF-kappaB activation and the innate immune response. Ubiquitinated; following IL1 stimulation or TRAF6 overexpression. Ubiquitination involves RBCK1 leading to proteasomal degradation. Ubiquitinated at Lys-611 by TRIM45 leading to proteasomal degradation. Post-translationally, phosphorylated. In terms of processing, (Microbial infection) Methylated at Cys-673 by enteropathogenic E.coli protein NleE or S.flexneri protein OspZ: methylation disrupts zinc-binding and ability to bind 'Lys-63'-linked ubiquitin, leading to NF-kappa-B inactivation. In terms of tissue distribution, widely expressed. In the embryo, expressed in the ventricular trabeculae, endothelial cells of the conotruncal cushions of the outflow tract and in the endothelial cells lining the developing aortic valves.

It is found in the membrane. It localises to the endosome membrane. Its subcellular location is the lysosome membrane. The protein localises to the cytoplasm. The protein resides in the cytosol. Adapter required to activate the JNK and NF-kappa-B signaling pathways through the specific recognition of 'Lys-63'-linked polyubiquitin chains by its RanBP2-type zinc finger (NZF). Acts as an adapter linking MAP3K7/TAK1 and TRAF6 to 'Lys-63'-linked polyubiquitin chains. The RanBP2-type zinc finger (NZF) specifically recognizes Lys-63'-linked polyubiquitin chains unanchored or anchored to the substrate proteins such as RIPK1/RIP1 and RIPK2: this acts as a scaffold to organize a large signaling complex to promote autophosphorylation of MAP3K7/TAK1, and subsequent activation of I-kappa-B-kinase (IKK) core complex by MAP3K7/TAK1. Also recognizes and binds Lys-63'-linked polyubiquitin chains of heterotypic 'Lys-63'-/'Lys-48'-linked branched ubiquitin chains. Regulates the IL1-mediated translocation of NCOR1 out of the nucleus. Involved in heart development. This chain is TGF-beta-activated kinase 1 and MAP3K7-binding protein 2, found in Homo sapiens (Human).